Here is a 144-residue protein sequence, read N- to C-terminus: Large-conductance mechanosensitive channel (144 aa).

The next 2 helical transmembrane spans lie at 21 to 41 (VGII…ANVI) and 76 to 96 (GIFL…FCII). Residues 105 to 144 (QRGGKTRRAVQTECGRDAAYRDPRSLETTKQRHGAGYNDD) form a disordered region. Over residues 118–134 (CGRDAAYRDPRSLETTK) the composition is skewed to basic and acidic residues.

Belongs to the MscL family. In terms of assembly, homopentamer.

The protein resides in the cell inner membrane. Its function is as follows. Channel that opens in response to stretch forces in the membrane lipid bilayer. May participate in the regulation of osmotic pressure changes within the cell. In Sodalis glossinidius (strain morsitans), this protein is Large-conductance mechanosensitive channel.